We begin with the raw amino-acid sequence, 271 residues long: Sorting nexin-11 (271 aa).

Residues 16–132 form the PX domain; that stretch reads VITVRVQDPR…HLFLQSQLSV (117 aa). Positions 59, 85, and 99 each coordinate a 1,2-diacyl-sn-glycero-3-phospho-(1D-myo-inositol-3-phosphate). The segment at 135 to 139 is important for membrane trafficking; it reads IEACV. The segment at 185-271 is disordered; that stretch reads PRSGRRSSPS…PTQLDTAWDK (87 aa). Residues 213–230 show a composition bias toward low complexity; it reads SEGPSSESPTLLPSSSLP.

Belongs to the sorting nexin family. In terms of assembly, monomer. Interacts with TRPV3; this interaction promotes TRPV3 trafficking from the cell membrane to lysosome for degradation.

The protein localises to the cell membrane. The protein resides in the endosome. It is found in the cytoplasm. In terms of biological role, phosphoinositide-binding protein involved in protein sorting and membrane trafficking in endosomes. Regulates the levels of TRPV3 by promoting its trafficking from the cell membrane to lysosome for degradation. In Mus musculus (Mouse), this protein is Sorting nexin-11 (Snx11).